We begin with the raw amino-acid sequence, 116 residues long: uncharacterized protein (116 aa).

A run of 2 helical transmembrane segments spans residues leucine 55–phenylalanine 77 and phenylalanine 87–leucine 109.

The protein resides in the membrane. This is an uncharacterized protein from Saccharomyces cerevisiae (strain ATCC 204508 / S288c) (Baker's yeast).